A 401-amino-acid polypeptide reads, in one-letter code: Alternative oxidase, mitochondrial (401 aa).

Positions 53-81 (KRASLSLQPSVREAEKSQGPVVGSEGRGV) are disordered. The chain crosses the membrane as a helical span at residues 184-204 (LFRIILLESIAGVPGMVGGTL). Residues glutamate 191, glutamate 230, and histidine 233 each coordinate Fe cation. A helical membrane pass occupies residues 249 to 269 (ALVLAAQGVFYNAFFLTYLIS). Fe cation is bound by residues glutamate 281, glutamate 282, glutamate 335, and histidine 338.

This sequence belongs to the alternative oxidase family. Fe cation is required as a cofactor.

The protein localises to the mitochondrion inner membrane. Functionally, catalyzes cyanide-resistant oxygen consumption. May increase respiration when the cytochrome respiratory pathway is restricted, or in response to low temperatures. The protein is Alternative oxidase, mitochondrial (AOX1) of Cryptococcus neoformans var. grubii serotype A (strain H99 / ATCC 208821 / CBS 10515 / FGSC 9487) (Filobasidiella neoformans var. grubii).